Consider the following 217-residue polypeptide: Elongation factor Ts (217 aa).

Residues 82–85 form an involved in Mg(2+) ion dislocation from EF-Tu region; it reads TDFV.

The protein belongs to the EF-Ts family.

It localises to the cytoplasm. In terms of biological role, associates with the EF-Tu.GDP complex and induces the exchange of GDP to GTP. It remains bound to the aminoacyl-tRNA.EF-Tu.GTP complex up to the GTP hydrolysis stage on the ribosome. This chain is Elongation factor Ts, found in Desulfitobacterium hafniense (strain DSM 10664 / DCB-2).